The following is a 246-amino-acid chain: Purine nucleoside phosphorylase Cgl2154/cg2365 (246 aa).

Zn(2+) is bound by residues H68, C107, and H124.

It belongs to the purine nucleoside phosphorylase YfiH/LACC1 family. Homodimer. Requires Cu(2+) as cofactor. It depends on Zn(2+) as a cofactor.

The enzyme catalyses adenosine + phosphate = alpha-D-ribose 1-phosphate + adenine. It catalyses the reaction S-methyl-5'-thioadenosine + phosphate = 5-(methylsulfanyl)-alpha-D-ribose 1-phosphate + adenine. It carries out the reaction inosine + phosphate = alpha-D-ribose 1-phosphate + hypoxanthine. The catalysed reaction is adenosine + H2O + H(+) = inosine + NH4(+). In terms of biological role, purine nucleoside enzyme that catalyzes the phosphorolysis of adenosine and inosine nucleosides, yielding D-ribose 1-phosphate and the respective free bases, adenine and hypoxanthine. Also catalyzes the phosphorolysis of S-methyl-5'-thioadenosine into adenine and S-methyl-5-thio-alpha-D-ribose 1-phosphate. Also has adenosine deaminase activity. The chain is Purine nucleoside phosphorylase Cgl2154/cg2365 from Corynebacterium glutamicum (strain ATCC 13032 / DSM 20300 / JCM 1318 / BCRC 11384 / CCUG 27702 / LMG 3730 / NBRC 12168 / NCIMB 10025 / NRRL B-2784 / 534).